The chain runs to 81 residues: Cytotoxin 5 (81 aa).

A signal peptide spans 1 to 21 (MKTLLLTLVVVTIVCLDLGYT). 4 disulfides stabilise this stretch: Cys24-Cys42, Cys35-Cys59, Cys63-Cys74, and Cys75-Cys80.

The protein belongs to the three-finger toxin family. Short-chain subfamily. Type IA cytotoxin sub-subfamily. In terms of assembly, monomer in solution; Homodimer and oligomer in the presence of negatively charged lipids forming a pore with a size ranging between 20 and 30 Angstroms. As to expression, expressed by the venom gland.

The protein localises to the secreted. Its subcellular location is the target cell membrane. Functionally, shows cytolytic activity on many different cells by forming pore in lipid membranes. In vivo, increases heart rate or kills the animal by cardiac arrest. In addition, it binds to heparin with high affinity, interacts with Kv channel-interacting protein 1 (KCNIP1) in a calcium-independent manner, and binds to integrin alpha-V/beta-3 (ITGAV/ITGB3) with moderate affinity. In Naja atra (Chinese cobra), this protein is Cytotoxin 5.